The following is a 310-amino-acid chain: tRNA-splicing endonuclease subunit Sen34 (310 aa).

The interval 119–177 is disordered; sequence GQAAKKQKLEQASGASSSQEAGSSQAAKEDETSDGQASGEQEEAGPSSSQAGPSNGVAP. Residues 128-144 are compositionally biased toward low complexity; it reads EQASGASSSQEAGSSQA. Residues Tyr247, His255, and Lys286 contribute to the active site.

It belongs to the tRNA-intron endonuclease family. TRNA splicing endonuclease is a heterotetramer composed of TSEN2, TSEN15, TSEN34/LENG5 and TSEN54. tRNA splicing endonuclease complex also contains proteins of the pre-mRNA 3'-end processing machinery such as CLP1, CPSF1, CPSF4 and CSTF2.

Its subcellular location is the nucleus. The protein localises to the nucleolus. It catalyses the reaction pretRNA = a 3'-half-tRNA molecule with a 5'-OH end + a 5'-half-tRNA molecule with a 2',3'-cyclic phosphate end + an intron with a 2',3'-cyclic phosphate and a 5'-hydroxyl terminus.. In terms of biological role, constitutes one of the two catalytic subunit of the tRNA-splicing endonuclease complex, a complex responsible for identification and cleavage of the splice sites in pre-tRNA. It cleaves pre-tRNA at the 5'- and 3'-splice sites to release the intron. The products are an intron and two tRNA half-molecules bearing 2',3'-cyclic phosphate and 5'-OH termini. There are no conserved sequences at the splice sites, but the intron is invariably located at the same site in the gene, placing the splice sites an invariant distance from the constant structural features of the tRNA body. It probably carries the active site for 3'-splice site cleavage. The tRNA splicing endonuclease is also involved in mRNA processing via its association with pre-mRNA 3'-end processing factors, establishing a link between pre-tRNA splicing and pre-mRNA 3'-end formation, suggesting that the endonuclease subunits function in multiple RNA-processing events. This chain is tRNA-splicing endonuclease subunit Sen34 (TSEN34), found in Homo sapiens (Human).